Reading from the N-terminus, the 572-residue chain is 2-succinyl-5-enolpyruvyl-6-hydroxy-3-cyclohexene-1-carboxylate synthase (572 aa).

The protein belongs to the TPP enzyme family. MenD subfamily. In terms of assembly, homodimer. The cofactor is Mg(2+). Requires Mn(2+) as cofactor. Thiamine diphosphate is required as a cofactor.

The catalysed reaction is isochorismate + 2-oxoglutarate + H(+) = 5-enolpyruvoyl-6-hydroxy-2-succinyl-cyclohex-3-ene-1-carboxylate + CO2. The protein operates within quinol/quinone metabolism; 1,4-dihydroxy-2-naphthoate biosynthesis; 1,4-dihydroxy-2-naphthoate from chorismate: step 2/7. Its pathway is quinol/quinone metabolism; menaquinone biosynthesis. Catalyzes the thiamine diphosphate-dependent decarboxylation of 2-oxoglutarate and the subsequent addition of the resulting succinic semialdehyde-thiamine pyrophosphate anion to isochorismate to yield 2-succinyl-5-enolpyruvyl-6-hydroxy-3-cyclohexene-1-carboxylate (SEPHCHC). The sequence is that of 2-succinyl-5-enolpyruvyl-6-hydroxy-3-cyclohexene-1-carboxylate synthase from Shewanella amazonensis (strain ATCC BAA-1098 / SB2B).